A 448-amino-acid chain; its full sequence is Squalene synthase ERG9 (448 aa).

A helical transmembrane segment spans residues Arg420–Leu440.

Belongs to the phytoene/squalene synthase family. Mg(2+) is required as a cofactor.

It localises to the endoplasmic reticulum membrane. It is found in the microsome. It catalyses the reaction 2 (2E,6E)-farnesyl diphosphate + NADPH + H(+) = squalene + 2 diphosphate + NADP(+). It carries out the reaction 2 (2E,6E)-farnesyl diphosphate + NADH + H(+) = squalene + 2 diphosphate + NAD(+). The protein operates within terpene metabolism; lanosterol biosynthesis; lanosterol from farnesyl diphosphate: step 1/3. In terms of biological role, squalene synthase; part of the third module of ergosterol biosynthesis pathway that includes the late steps of the pathway. ERG9 produces squalene from 2 farnesyl pyrophosphate moieties. The third module or late pathway involves the ergosterol synthesis itself through consecutive reactions that mainly occur in the endoplasmic reticulum (ER) membrane. Firstly, the squalene synthase ERG9 catalyzes the condensation of 2 farnesyl pyrophosphate moieties to form squalene, which is the precursor of all steroids. Squalene synthase is crucial for balancing the incorporation of farnesyl diphosphate (FPP) into sterol and nonsterol isoprene synthesis. Secondly, the squalene epoxidase ERG1 catalyzes the stereospecific oxidation of squalene to (S)-2,3-epoxysqualene, which is considered to be a rate-limiting enzyme in steroid biosynthesis. Then, the lanosterol synthase ERG7 catalyzes the cyclization of (S)-2,3 oxidosqualene to lanosterol, a reaction that forms the sterol core. In the next steps, lanosterol is transformed to zymosterol through a complex process involving various demethylation, reduction and desaturation reactions. The lanosterol 14-alpha-demethylase ERG11 (also known as CYP51) catalyzes C14-demethylation of lanosterol to produce 4,4'-dimethyl cholesta-8,14,24-triene-3-beta-ol, which is critical for ergosterol biosynthesis. The C-14 reductase ERG24 reduces the C14=C15 double bond of 4,4-dimethyl-cholesta-8,14,24-trienol to produce 4,4-dimethyl-cholesta-8,24-dienol. 4,4-dimethyl-cholesta-8,24-dienol is substrate of the C-4 demethylation complex ERG25-ERG26-ERG27 in which ERG25 catalyzes the three-step monooxygenation required for the demethylation of 4,4-dimethyl and 4alpha-methylsterols, ERG26 catalyzes the oxidative decarboxylation that results in a reduction of the 3-beta-hydroxy group at the C-3 carbon to an oxo group, and ERG27 is responsible for the reduction of the keto group on the C-3. ERG28 has a role as a scaffold to help anchor ERG25, ERG26 and ERG27 to the endoplasmic reticulum and ERG29 regulates the activity of the iron-containing C4-methylsterol oxidase ERG25. Then, the sterol 24-C-methyltransferase ERG6 catalyzes the methyl transfer from S-adenosyl-methionine to the C-24 of zymosterol to form fecosterol. The C-8 sterol isomerase ERG2 catalyzes the reaction which results in unsaturation at C-7 in the B ring of sterols and thus converts fecosterol to episterol. The sterol-C5-desaturase ERG3 then catalyzes the introduction of a C-5 double bond in the B ring to produce 5-dehydroepisterol. The C-22 sterol desaturase ERG5 further converts 5-dehydroepisterol into ergosta-5,7,22,24(28)-tetraen-3beta-ol by forming the C-22(23) double bond in the sterol side chain. Finally, ergosta-5,7,22,24(28)-tetraen-3beta-ol is substrate of the C-24(28) sterol reductase ERG4 to produce ergosterol. In Candida albicans (Yeast), this protein is Squalene synthase ERG9.